A 178-amino-acid chain; its full sequence is Cytochrome c-type biogenesis protein CcmE (178 aa).

Residues 1–8 (MNPRRKKR) are Cytoplasmic-facing. The chain crosses the membrane as a helical; Signal-anchor for type II membrane protein span at residues 9–29 (LAIVGSILIGIGVVSGLVLYA). The Periplasmic segment spans residues 30–178 (LSQNIDLFFT…QLESKKTNSY (149 aa)). Residues histidine 143 and tyrosine 147 each coordinate heme. The segment at 154-178 (EAAGQKHDKATYSDKQLESKKTNSY) is disordered. A compositionally biased stretch (basic and acidic residues) spans 157–178 (GQKHDKATYSDKQLESKKTNSY).

The protein belongs to the CcmE/CycJ family.

The protein localises to the cell inner membrane. Functionally, heme chaperone required for the biogenesis of c-type cytochromes. Transiently binds heme delivered by CcmC and transfers the heme to apo-cytochromes in a process facilitated by CcmF and CcmH. This is Cytochrome c-type biogenesis protein CcmE from Colwellia psychrerythraea (strain 34H / ATCC BAA-681) (Vibrio psychroerythus).